We begin with the raw amino-acid sequence, 31 residues long: Gamma-conotoxin-like As7a (31 aa).

Disulfide bonds link C2/C16, C9/C20, and C15/C31. Residue E14 is modified to 4-carboxyglutamate.

This sequence belongs to the conotoxin O1 superfamily. Expressed by the venom duct.

It localises to the secreted. Gamma-conotoxins may act on voltage-gated non-specific cation pacemaker channels (HCN). Elicits toxic effects in the freshwater snail Pomacea paludosa after intramuscular injection, but it has no effect when injected intracerebrally into mice. The polypeptide is Gamma-conotoxin-like As7a (Conus cancellatus (Cancellate cone)).